Consider the following 1198-residue polypeptide: Phosphatidylinositol-3,5-bisphosphate 3-phosphatase MTMR3 (1198 aa).

Position 8 is a phosphoserine (S8). Positions 155 to 576 (EHVTSRFKNE…RNLMLWSAVY (422 aa)) constitute a Myotubularin phosphatase domain. Residues 265–280 (SRSSGSKLSTRNTSRD) show a composition bias toward polar residues. The tract at residues 265-285 (SRSSGSKLSTRNTSRDFPNGG) is disordered. 3 residues coordinate a 1,2-diacyl-sn-glycero-3-phospho-(1D-myo-inositol-3,5-bisphosphate): N326, N351, and I352. A 1,2-diacyl-sn-glycero-3-phospho-(1D-myo-inositol-3-phosphate) contacts are provided by N326, N351, and I352. C413 functions as the Phosphocysteine intermediate in the catalytic mechanism. Residues S414, D415, G416, W417, D418, R419, K455, and R459 each contribute to the a 1,2-diacyl-sn-glycero-3-phospho-(1D-myo-inositol-3,5-bisphosphate) site. Residues S414, D415, G416, W417, D418, and R419 each contribute to the a 1,2-diacyl-sn-glycero-3-phospho-(1D-myo-inositol-3-phosphate) site. R459 is a binding site for a 1,2-diacyl-sn-glycero-3-phospho-(1D-myo-inositol-3-phosphate). Residues 590-612 (CAPYPAPGTSPDDPPLSRLPKTR) are disordered. A compositionally biased stretch (pro residues) spans 593-603 (YPAPGTSPDDP). Phosphoserine occurs at positions 613, 633, 647, and 651. Disordered regions lie at residues 650–669 (LSSLAGPGEDPLSADSLGKP), 716–735 (EGKEDPLLEKESRRKTPEAS), and 855–891 (KSVSGPQGHHRSCLVNSGKDRLPQTMEPSPSETSLVE). Positions 716-732 (EGKEDPLLEKESRRKTP) are enriched in basic and acidic residues. Phosphothreonine is present on T731. Phosphoserine is present on residues S906 and S909. 2 disordered regions span residues 933–974 (ETEN…SRQL) and 993–1019 (WLHSHSGRPSATSSPDQPSRSHLDDDG). The span at 999-1010 (GRPSATSSPDQP) shows a compositional bias: polar residues. Positions 1029–1062 (QRLRQIESGHQQEVETLKKQVQELKSRLESQYLT) form a coiled coil. Phosphoserine is present on S1064. The segment at 1119–1179 (DHLAAHCYAC…VCKSCYSSLH (61 aa)) adopts an FYVE-type zinc-finger fold. C1125, C1128, C1141, C1144, C1149, C1152, C1171, and C1174 together coordinate Zn(2+).

The protein belongs to the protein-tyrosine phosphatase family. Non-receptor class myotubularin subfamily. In terms of assembly, forms heterodimers with MTMR4 that recruit both CEP55 and PLK1; occurs during early mitosis, regulates the phosphorylation of CEP55 by PLK1 and its recruitment to the midbody where it mediates cell abscission. In terms of processing, phosphorylated by CDK1 during mitosis.

The protein resides in the cytoplasm. It is found in the cytosol. Its subcellular location is the membrane. The enzyme catalyses a 1,2-diacyl-sn-glycero-3-phospho-(1D-myo-inositol-3,5-bisphosphate) + H2O = a 1,2-diacyl-sn-glycero-3-phospho-(1D-myo-inositol-5-phosphate) + phosphate. It catalyses the reaction a 1,2-diacyl-sn-glycero-3-phospho-(1D-myo-inositol-3-phosphate) + H2O = a 1,2-diacyl-sn-glycero-3-phospho-(1D-myo-inositol) + phosphate. It carries out the reaction 1,2-dihexadecanoyl-sn-glycero-3-phospho-(1D-myo-inositol-3-phosphate) + H2O = 1,2-dihexadecanoyl-sn-glycero-3-phospho-(1D-myo-inositol) + phosphate. The catalysed reaction is 1,2-dioctanoyl-sn-glycero-3-phospho-(1-D-myo-inositol-3-phosphate) + H2O = 1,2-dioctanoyl-sn-glycero-3-phospho-(1D-myo-inositol) + phosphate. The enzyme catalyses 1,2-dihexadecanoyl-sn-glycero-3-phospho-(1D-myo-inositol-3,5-phosphate) + H2O = 1,2-dihexadecanoyl-sn-glycero-3-phospho-(1D-myo-inositol-5-phosphate) + phosphate. Lipid phosphatase that specifically dephosphorylates the D-3 position of phosphatidylinositol 3-phosphate and phosphatidylinositol 3,5-bisphosphate, generating phosphatidylinositol and phosphatidylinositol 5-phosphate. Decreases the levels of phosphatidylinositol 3-phosphate, a phospholipid found in cell membranes where it acts as key regulator of both cell signaling and intracellular membrane traffic. Could also have a molecular sequestering/adapter activity and regulate biological processes independently of its phosphatase activity. It includes the regulation of midbody abscission during mitotic cytokinesis. The polypeptide is Phosphatidylinositol-3,5-bisphosphate 3-phosphatase MTMR3 (Homo sapiens (Human)).